The primary structure comprises 632 residues: Extracellular metalloproteinase 1 (632 aa).

The N-terminal stretch at 1-19 (MHGLLLAAGLISLPLHVLA) is a signal peptide. The propeptide occupies 20–246 (HPQPSSTSLA…VVDYVAHATF (227 aa)). Asn284 carries N-linked (GlcNAc...) asparagine glycosylation. Thr430 lines the Zn(2+) pocket. His431 is an active-site residue. Residue Ser434 coordinates Zn(2+). Asn591 carries N-linked (GlcNAc...) asparagine glycosylation.

This sequence belongs to the peptidase M36 family. Zn(2+) serves as cofactor.

It localises to the secreted. Its activity is regulated as follows. PMSF, soybean trypsin inhibitor (SBTI) and chymostatin strongly inhibit the proteinase. Its function is as follows. Secreted metalloproteinase probably acting as a virulence factor. This chain is Extracellular metalloproteinase 1 (MEP1), found in Arthroderma otae (Microsporum canis).